Consider the following 576-residue polypeptide: Sulfite reductase [NADPH] hemoprotein beta-component (576 aa).

Residues Cys-435, Cys-441, Cys-480, and Cys-484 each contribute to the [4Fe-4S] cluster site. Cys-484 serves as a coordination point for siroheme.

This sequence belongs to the nitrite and sulfite reductase 4Fe-4S domain family. As to quaternary structure, alpha(8)-beta(8). The alpha component is a flavoprotein, the beta component is a hemoprotein. Siroheme serves as cofactor. [4Fe-4S] cluster is required as a cofactor.

The catalysed reaction is hydrogen sulfide + 3 NADP(+) + 3 H2O = sulfite + 3 NADPH + 4 H(+). The protein operates within sulfur metabolism; hydrogen sulfide biosynthesis; hydrogen sulfide from sulfite (NADPH route): step 1/1. In terms of biological role, component of the sulfite reductase complex that catalyzes the 6-electron reduction of sulfite to sulfide. This is one of several activities required for the biosynthesis of L-cysteine from sulfate. This Yersinia pseudotuberculosis serotype IB (strain PB1/+) protein is Sulfite reductase [NADPH] hemoprotein beta-component.